The primary structure comprises 648 residues: Phosphatidylinositol polyphosphate 5-phosphatase type IV (648 aa).

Residues 1-64 (MPSKSACLRH…PLSMPAKPSN (64 aa)) form a disordered region. Residues 36–54 (TSASLPAADSQSSQTNSMP) show a composition bias toward polar residues. 2 repeat units span residues 59–62 (PAKP) and 76–79 (PQPP). Residues 59-243 (PAKPSNQNLQ…AHSNLGPSRP (185 aa)) are 4 X 4 AA repeats of P-X-X-P. Residues 99-158 (RFRGSQEDLTVQNGASPCRGSLQDSVAQSPAYSRPLPCLSTSLQEIPKPRRATGSEGGSP) form a disordered region. Serine 103 carries the post-translational modification Phosphoserine. Positions 120–129 (LQDSVAQSPA) are enriched in polar residues. Copy 3 of the repeat occupies 147-150 (PRRA). Threonine 197 carries the phosphothreonine modification. Residues 240–243 (PSRP) form repeat 4. A phosphoserine mark is found at serine 245 and serine 260. The residue at position 645 (cysteine 645) is a Cysteine methyl ester. The S-farnesyl cysteine moiety is linked to residue cysteine 645. Residues 646-648 (TVS) constitute a propeptide, removed in mature form.

The protein belongs to the inositol 1,4,5-trisphosphate 5-phosphatase type IV family. Interacts (when prenylated) with PDE6D; this is important for normal location in cilia.

It is found in the cytoplasm. The protein localises to the cytoskeleton. Its subcellular location is the cilium axoneme. The protein resides in the golgi apparatus. It localises to the golgi stack membrane. It is found in the cell membrane. The protein localises to the cell projection. Its subcellular location is the ruffle. The protein resides in the nucleus. It carries out the reaction a 1,2-diacyl-sn-glycero-3-phospho-(1D-myo-inositol-4,5-bisphosphate) + H2O = a 1,2-diacyl-sn-glycero-3-phospho-(1D-myo-inositol 4-phosphate) + phosphate. The catalysed reaction is a 1,2-diacyl-sn-glycero-3-phospho-(1D-myo-inositol-3,4,5-trisphosphate) + H2O = a 1,2-diacyl-sn-glycero-3-phospho-(1D-myo-inositol-3,4-bisphosphate) + phosphate. It catalyses the reaction a 1,2-diacyl-sn-glycero-3-phospho-(1D-myo-inositol-3,5-bisphosphate) + H2O = a 1,2-diacyl-sn-glycero-3-phospho-(1D-myo-inositol-3-phosphate) + phosphate. Functionally, phosphatidylinositol (PtdIns) phosphatase that specifically hydrolyzes the 5-phosphate of phosphatidylinositol-3,4,5-trisphosphate (PtdIns(3,4,5)P3), phosphatidylinositol 4,5-bisphosphate PtdIns (4,5)P2 and phosphatidylinositol 3,5-bisphosphate (PtdIns(3,5)P2). Specific for lipid substrates, inactive towards water soluble inositol phosphates. Plays an essential role in the primary cilium by controlling ciliary growth and phosphoinositide 3-kinase (PI3K) signaling and stability. This chain is Phosphatidylinositol polyphosphate 5-phosphatase type IV (Inpp5e), found in Rattus norvegicus (Rat).